Here is a 338-residue protein sequence, read N- to C-terminus: Solute-binding protein Rfer_1840 (338 aa).

An N-terminal signal peptide occupies residues 1–25 (MQRRQLLQSMGGLAASTMPFSLAFA). Residues Arg-47, Tyr-100, Arg-175, Ser-197, 214-218 (TSSTS), and Glu-244 contribute to the malonate site.

Belongs to the bacterial solute-binding protein 7 family. As to quaternary structure, the complex is comprised of an extracytoplasmic solute-binding protein and a heteromeric permease formed by two transmembrane proteins.

The protein localises to the periplasm. In terms of biological role, solute-binding protein that binds malonate (in vitro). Probably part of a tripartite ATP-independent periplasmic (TRAP) transport system that mediates solute transport into the cytoplasm. This Albidiferax ferrireducens (strain ATCC BAA-621 / DSM 15236 / T118) (Rhodoferax ferrireducens) protein is Solute-binding protein Rfer_1840.